The sequence spans 429 residues: 3-phosphoshikimate 1-carboxyvinyltransferase (429 aa).

The 3-phosphoshikimate site is built by lysine 20, serine 21, and arginine 25. Lysine 20 contributes to the phosphoenolpyruvate binding site. Residues glycine 89 and arginine 118 each contribute to the phosphoenolpyruvate site. Residues serine 164, serine 165, glutamine 166, serine 192, aspartate 311, and lysine 338 each coordinate 3-phosphoshikimate. Glutamine 166 lines the phosphoenolpyruvate pocket. Aspartate 311 (proton acceptor) is an active-site residue. Phosphoenolpyruvate-binding residues include arginine 342 and arginine 384.

Belongs to the EPSP synthase family. Monomer.

It is found in the cytoplasm. It catalyses the reaction 3-phosphoshikimate + phosphoenolpyruvate = 5-O-(1-carboxyvinyl)-3-phosphoshikimate + phosphate. It participates in metabolic intermediate biosynthesis; chorismate biosynthesis. Functionally, catalyzes the transfer of the enolpyruvyl moiety of phosphoenolpyruvate (PEP) to the 5-hydroxyl of shikimate-3-phosphate (S3P) to produce enolpyruvyl shikimate-3-phosphate and inorganic phosphate. The chain is 3-phosphoshikimate 1-carboxyvinyltransferase from Methanococcus maripaludis (strain C7 / ATCC BAA-1331).